Here is a 98-residue protein sequence, read N- to C-terminus: Defensin (98 aa).

Positions 1–19 (MRTFLVTFVLVVVVGVISA) are cleaved as a signal peptide. A propeptide spanning residues 20–58 (YPSNPVEVEAEDFDAQDPDLQTFQDTFYEVPQVHSRQKR) is cleaved from the precursor. 3 disulfides stabilise this stretch: Cys61–Cys88, Cys74–Cys94, and Cys78–Cys96.

As to expression, is synthesized by the fat body and eventually secreted into the hemolymph.

Its subcellular location is the secreted. Its function is as follows. Has antiparasitic activity against promastigote forms of L.major, and antibacterial activity against Gram-positive bacterium S.aureus. Has antifungal activity against the yeasts C.albicans and S.cerevisiae, but not C.glabrata. Has antifungal activity against filamentous fungi A.fumigatus, F.culmorum, F.oxysporum, N.crassa, T.viride and T.mentagrophytes, but not B.bassiana. The protein is Defensin of Phlebotomus duboscqi (Sandfly).